The sequence spans 230 residues: MTGSIRSKLSAIDVRQLGTVDYRTAWQLQRELADARVAGGADTLLLLEHPAVYTAGRRTETHERPIDGTPVVGTDRGGKITWHGPGQLVGYPIIGLAEPLDVVNYVRRLEESLIQVCADLGLHAGRVDGRSGVWLPGRPARKVAAIGVRVSRATTLHGFALNCDCDLAAFTAIVPCGISDAAVTSLSAELGRTVTVDEVRATVAAAVCAALDGVLPVGDRVPSHAVPSPL.

In terms of domain architecture, BPL/LPL catalytic spans 38-215 (AGGADTLLLL…AVCAALDGVL (178 aa)). Substrate-binding positions include 76 to 83 (RGGKITWH), 145 to 147 (AIG), and 158 to 160 (GFA). The active-site Acyl-thioester intermediate is Cys176.

It belongs to the LipB family.

It localises to the cytoplasm. The catalysed reaction is octanoyl-[ACP] + L-lysyl-[protein] = N(6)-octanoyl-L-lysyl-[protein] + holo-[ACP] + H(+). Its pathway is protein modification; protein lipoylation via endogenous pathway; protein N(6)-(lipoyl)lysine from octanoyl-[acyl-carrier-protein]: step 1/2. In terms of biological role, catalyzes the transfer of endogenously produced octanoic acid from octanoyl-acyl-carrier-protein onto the lipoyl domains of lipoate-dependent enzymes. Lipoyl-ACP can also act as a substrate although octanoyl-ACP is likely to be the physiological substrate. This chain is Octanoyltransferase, found in Mycobacterium bovis (strain BCG / Tokyo 172 / ATCC 35737 / TMC 1019).